The primary structure comprises 387 residues: Alpha-maltose-1-phosphate synthase (387 aa).

It belongs to the glycosyltransferase group 1 family.

It catalyses the reaction ADP-alpha-D-glucose + alpha-D-glucose 1-phosphate = alpha-maltose 1-phosphate + ADP + H(+). It participates in glycan biosynthesis; glycogen biosynthesis. Functionally, involved in the biosynthesis of the maltose-1-phosphate (M1P) building block required for alpha-glucan production by the key enzyme GlgE. Catalyzes the formation of an alpha-1,4 linkage between glucose from ADP-glucose and glucose 1-phosphate (G1P) to yield maltose-1-phosphate (M1P). The chain is Alpha-maltose-1-phosphate synthase from Mycolicibacterium smegmatis (strain ATCC 700084 / mc(2)155) (Mycobacterium smegmatis).